The following is a 438-amino-acid chain: Aflatoxin cluster transcriptional coactivator aflS (438 aa).

The HTH iclR-type domain occupies 65–134 (LALYNQLLAC…PSPGHVAHSV (70 aa)). A DNA-binding region (H-T-H motif) is located at residues 95–114 (FEDVADIAGVPECRLRRLVR).

As to quaternary structure, interacts with aflR.

It localises to the nucleus. In terms of biological role, transcription factor; part of the gene cluster that mediates the biosynthesis of aflatoxin, a polyketide-derived furanocoumarin which is part of the most toxic and carcinogenic compounds among the known mycotoxins. AflS exhibits no DNA-binding capability on its own, but forms a complex with the other aflatoxin cluster transcription factor aflR and acts as a modulator of aflR's DNA-binding by decreasing its DNA-binding affinity. The protein is Aflatoxin cluster transcriptional coactivator aflS of Aspergillus flavus (strain ATCC 200026 / FGSC A1120 / IAM 13836 / NRRL 3357 / JCM 12722 / SRRC 167).